The following is a 371-amino-acid chain: DNA replication and repair protein RecF (371 aa).

An ATP-binding site is contributed by 30 to 37 (GENAQGKT).

It belongs to the RecF family.

It localises to the cytoplasm. Its function is as follows. The RecF protein is involved in DNA metabolism; it is required for DNA replication and normal SOS inducibility. RecF binds preferentially to single-stranded, linear DNA. It also seems to bind ATP. The sequence is that of DNA replication and repair protein RecF from Lysinibacillus sphaericus (strain C3-41).